A 129-amino-acid polypeptide reads, in one-letter code: Small ribosomal subunit protein uS11 (129 aa).

The protein belongs to the universal ribosomal protein uS11 family. Part of the 30S ribosomal subunit. Interacts with proteins S7 and S18. Binds to IF-3.

In terms of biological role, located on the platform of the 30S subunit, it bridges several disparate RNA helices of the 16S rRNA. Forms part of the Shine-Dalgarno cleft in the 70S ribosome. The sequence is that of Small ribosomal subunit protein uS11 from Pasteurella multocida (strain Pm70).